Consider the following 463-residue polypeptide: Protein phosphatase PP2A regulatory subunit B (463 aa).

2 WD repeats span residues 27–66 (TEAD…KGCE) and 87–128 (EIEE…LKVV). Ser-134 is subject to Phosphoserine. WD repeat units lie at residues 174-212 (AHAY…HSFN), 223-263 (ELTE…LCDN), 282-320 (EIIS…APVK), and 337-378 (ENDC…PGDR).

Belongs to the phosphatase 2A regulatory subunit B family. PP2A exists in several trimeric forms, all of which consist of a core composed of a catalytic subunit associated with a 65 kDa (PR65) (Subunit A) and a 55 kDa (PR55) (Subunit B) regulatory subunit.

Phosphatase 2A affects a variety of biological processes in the cell such as transcription, cell cycle progression and cellular morphogenesis, and provides an initial identification of critical substrates for this phosphatase. The regulatory subunit may direct the catalytic subunit to distinct, albeit overlapping, subsets of substrates. The sequence is that of Protein phosphatase PP2A regulatory subunit B (pab1) from Schizosaccharomyces pombe (strain 972 / ATCC 24843) (Fission yeast).